A 261-amino-acid chain; its full sequence is Cytochrome c oxidase subunit 3 (261 aa).

Topologically, residues 1–15 (MTHQTHAYHMVNPSP) are mitochondrial matrix. Residues 16-34 (WPLTGALSALLMTSGLAMW) form a helical membrane-spanning segment. Residues 35 to 40 (FHFNSP) are Mitochondrial intermembrane-facing. The chain crosses the membrane as a helical span at residues 41–66 (SLLLIGLVTNTLTMYQWWRDIVREGT). The Mitochondrial matrix portion of the chain corresponds to 67–72 (FQGHHT). A helical transmembrane segment spans residues 73–105 (PIVQKGLRYGMILFIISEVFFFAGFFWAFYHSS). Residues 106 to 128 (LAPTPELGGCWPPTGINPLNPLE) lie on the Mitochondrial intermembrane side of the membrane. Residues 129–152 (VPLLNTSVLLASGVSITWAHHSLM) traverse the membrane as a helical segment. The Mitochondrial matrix portion of the chain corresponds to 153-155 (EGN). A helical membrane pass occupies residues 156-183 (RKNMQQALAITILLGIYFTLLQASEYYE). Over 184 to 190 (TSFTISD) the chain is Mitochondrial intermembrane. A helical transmembrane segment spans residues 191–223 (GVYGSTFFMATGFHGLHVIIGSTFLTVCLLRQF). Residues 224-232 (NFHFTSNHH) are Mitochondrial matrix-facing. The helical transmembrane segment at 233–256 (FGFEAAAWYWHFVDVVWLFLYVSI) threads the bilayer. The Mitochondrial intermembrane segment spans residues 257–261 (YWWGS).

Belongs to the cytochrome c oxidase subunit 3 family. As to quaternary structure, component of the cytochrome c oxidase (complex IV, CIV), a multisubunit enzyme composed of 14 subunits. The complex is composed of a catalytic core of 3 subunits MT-CO1, MT-CO2 and MT-CO3, encoded in the mitochondrial DNA, and 11 supernumerary subunits COX4I, COX5A, COX5B, COX6A, COX6B, COX6C, COX7A, COX7B, COX7C, COX8 and NDUFA4, which are encoded in the nuclear genome. The complex exists as a monomer or a dimer and forms supercomplexes (SCs) in the inner mitochondrial membrane with NADH-ubiquinone oxidoreductase (complex I, CI) and ubiquinol-cytochrome c oxidoreductase (cytochrome b-c1 complex, complex III, CIII), resulting in different assemblies (supercomplex SCI(1)III(2)IV(1) and megacomplex MCI(2)III(2)IV(2)).

It is found in the mitochondrion inner membrane. The catalysed reaction is 4 Fe(II)-[cytochrome c] + O2 + 8 H(+)(in) = 4 Fe(III)-[cytochrome c] + 2 H2O + 4 H(+)(out). Its function is as follows. Component of the cytochrome c oxidase, the last enzyme in the mitochondrial electron transport chain which drives oxidative phosphorylation. The respiratory chain contains 3 multisubunit complexes succinate dehydrogenase (complex II, CII), ubiquinol-cytochrome c oxidoreductase (cytochrome b-c1 complex, complex III, CIII) and cytochrome c oxidase (complex IV, CIV), that cooperate to transfer electrons derived from NADH and succinate to molecular oxygen, creating an electrochemical gradient over the inner membrane that drives transmembrane transport and the ATP synthase. Cytochrome c oxidase is the component of the respiratory chain that catalyzes the reduction of oxygen to water. Electrons originating from reduced cytochrome c in the intermembrane space (IMS) are transferred via the dinuclear copper A center (CU(A)) of subunit 2 and heme A of subunit 1 to the active site in subunit 1, a binuclear center (BNC) formed by heme A3 and copper B (CU(B)). The BNC reduces molecular oxygen to 2 water molecules using 4 electrons from cytochrome c in the IMS and 4 protons from the mitochondrial matrix. The sequence is that of Cytochrome c oxidase subunit 3 (MT-CO3) from Oryctolagus cuniculus (Rabbit).